We begin with the raw amino-acid sequence, 206 residues long: Small ribosomal subunit protein uS4A (206 aa).

The 66-residue stretch at 98–163 folds into the S4 RNA-binding domain; that stretch reads MRLDNVVYRL…SERFKMFAEN (66 aa).

Belongs to the universal ribosomal protein uS4 family. As to quaternary structure, part of the 30S ribosomal subunit. Contacts protein S5. The interaction surface between S4 and S5 is involved in control of translational fidelity.

Functionally, one of the primary rRNA binding proteins, it binds directly to 16S rRNA where it nucleates assembly of the body of the 30S subunit. With S5 and S12 plays an important role in translational accuracy. This Clostridium perfringens (strain ATCC 13124 / DSM 756 / JCM 1290 / NCIMB 6125 / NCTC 8237 / Type A) protein is Small ribosomal subunit protein uS4A.